Reading from the N-terminus, the 84-residue chain is Exodeoxyribonuclease 7 small subunit (84 aa).

Belongs to the XseB family. In terms of assembly, heterooligomer composed of large and small subunits.

The protein localises to the cytoplasm. The catalysed reaction is Exonucleolytic cleavage in either 5'- to 3'- or 3'- to 5'-direction to yield nucleoside 5'-phosphates.. Functionally, bidirectionally degrades single-stranded DNA into large acid-insoluble oligonucleotides, which are then degraded further into small acid-soluble oligonucleotides. This Bartonella bacilliformis (strain ATCC 35685 / KC583 / Herrer 020/F12,63) protein is Exodeoxyribonuclease 7 small subunit.